The following is a 150-amino-acid chain: UPF0756 membrane protein ABSDF1616 (150 aa).

A run of 4 helical transmembrane segments spans residues 1–21, 45–65, 83–103, and 115–135; these read MLAQ…CGLL, FFPY…TIGV, FISF…WLGG, and VVAG…GVPV.

Belongs to the UPF0756 family.

The protein resides in the cell membrane. This chain is UPF0756 membrane protein ABSDF1616, found in Acinetobacter baumannii (strain SDF).